A 156-amino-acid polypeptide reads, in one-letter code: Small ribosomal subunit protein uS7 (156 aa).

The protein belongs to the universal ribosomal protein uS7 family. In terms of assembly, part of the 30S ribosomal subunit. Contacts proteins S9 and S11.

Its function is as follows. One of the primary rRNA binding proteins, it binds directly to 16S rRNA where it nucleates assembly of the head domain of the 30S subunit. Is located at the subunit interface close to the decoding center, probably blocks exit of the E-site tRNA. This Lawsonia intracellularis (strain PHE/MN1-00) protein is Small ribosomal subunit protein uS7.